The sequence spans 119 residues: Probable cyclase otaY (119 aa).

The protein belongs to the aurE cyclase family.

The protein operates within mycotoxin biosynthesis. In terms of biological role, probable cyclase; part of the gene cluster that mediates the biosynthesis of ochratoxin A (OTA), a mycotoxin composed of a chlorinated type I polyketide dihydroisocoumarin moiety linked to L-phenylalanine, and demonstrated to have nephrotoxic, immunotoxic, genotoxic, neurotoxic, and teratogenic properties. OtaY is probably involved in the polyketide cyclization. The pathway begins with the highly reducing polyketide synthase otaA that catalyzes the formation of the isocoumarin group during the initial stages of biosynthesis, starting from one acetate and 4 malonate units, to originate the characteristic pentaketide skeleton 7-methylmellein (7-MM) of the OTA molecule. The newly identified cyclase otaY might be involved in the polyketide cyclization reaction during the initial steps of the OTA biosynthesis. 7-MM is then oxidized into 7-carboxymellein (also called ochratoxin beta) by the cytochrome P450 monooxygenase otaC. The NRPS encoded by the otaB gene is involved in the linking of phenylalanine to the dihydroisocoumarin ring. The reaction catalyzed by NRPS results in the production of ochratoxin B (OTB), which is the non-chlorinated analog of OTA and which subsequently serves as the substrate of the halogenase otaD for chlorination activity to form the final molecular structure of OTA, containing a chlorine atom in the C-5 position of the molecule. The chain is Probable cyclase otaY from Aspergillus niger (strain ATCC MYA-4892 / CBS 513.88 / FGSC A1513).